The sequence spans 315 residues: Methionyl-tRNA formyltransferase (315 aa).

107 to 110 (SLLP) provides a ligand contact to (6S)-5,6,7,8-tetrahydrofolate.

Belongs to the Fmt family.

The enzyme catalyses L-methionyl-tRNA(fMet) + (6R)-10-formyltetrahydrofolate = N-formyl-L-methionyl-tRNA(fMet) + (6S)-5,6,7,8-tetrahydrofolate + H(+). Its function is as follows. Attaches a formyl group to the free amino group of methionyl-tRNA(fMet). The formyl group appears to play a dual role in the initiator identity of N-formylmethionyl-tRNA by promoting its recognition by IF2 and preventing the misappropriation of this tRNA by the elongation apparatus. The sequence is that of Methionyl-tRNA formyltransferase from Borreliella afzelii (strain PKo) (Borrelia afzelii).